We begin with the raw amino-acid sequence, 341 residues long: UDP-3-O-acylglucosamine N-acyltransferase (341 aa).

His-241 functions as the Proton acceptor in the catalytic mechanism.

The protein belongs to the transferase hexapeptide repeat family. LpxD subfamily. As to quaternary structure, homotrimer.

The catalysed reaction is a UDP-3-O-[(3R)-3-hydroxyacyl]-alpha-D-glucosamine + a (3R)-hydroxyacyl-[ACP] = a UDP-2-N,3-O-bis[(3R)-3-hydroxyacyl]-alpha-D-glucosamine + holo-[ACP] + H(+). The protein operates within bacterial outer membrane biogenesis; LPS lipid A biosynthesis. Functionally, catalyzes the N-acylation of UDP-3-O-acylglucosamine using 3-hydroxyacyl-ACP as the acyl donor. Is involved in the biosynthesis of lipid A, a phosphorylated glycolipid that anchors the lipopolysaccharide to the outer membrane of the cell. This chain is UDP-3-O-acylglucosamine N-acyltransferase, found in Saccharophagus degradans (strain 2-40 / ATCC 43961 / DSM 17024).